Reading from the N-terminus, the 73-residue chain is UPF0346 protein SSP1318 (73 aa).

Belongs to the UPF0346 family.

The sequence is that of UPF0346 protein SSP1318 from Staphylococcus saprophyticus subsp. saprophyticus (strain ATCC 15305 / DSM 20229 / NCIMB 8711 / NCTC 7292 / S-41).